The chain runs to 1284 residues: DNA topoisomerase 2, mitochondrial (1284 aa).

The transit peptide at 1-35 directs the protein to the mitochondrion; the sequence is MSKLLNNNNHKNLTNYLKFGKGIINNLNNKSKQVG. Residues Asn183, Asn212, 240-242, and 253-260 contribute to the ATP site; these read GSN and GRNGFGAK. Residues 445-447 are interaction with DNA; sequence KKK. 478–480 contacts ATP; sequence QSK. Residues 560 to 677 form the Toprim domain; the sequence is CTLIITEGDS…NLLKRGFLVE (118 aa). Glu566, Asp646, and Asp648 together coordinate Mg(2+). A Topo IIA-type catalytic domain is found at 810–1232; it reads IPSLIDGLKP…DPKSLWTADL (423 aa). The active-site O-(5'-phospho-DNA)-tyrosine intermediate is Tyr900. The segment at 1245–1284 is disordered; sequence EFQKKPLKTSSSSSFDVSSSSESAKLSSTRKSKTDKIKSK. Positions 1254 to 1271 are enriched in low complexity; the sequence is SSSSSFDVSSSSESAKLS.

This sequence belongs to the type II topoisomerase family. As to quaternary structure, homodimer. It depends on Mg(2+) as a cofactor. Mn(2+) is required as a cofactor. Ca(2+) serves as cofactor.

Its subcellular location is the mitochondrion. It catalyses the reaction ATP-dependent breakage, passage and rejoining of double-stranded DNA.. In terms of biological role, control of topological states of DNA by transient breakage and subsequent rejoining of DNA strands. Topoisomerase II makes double-strand breaks. The sequence is that of DNA topoisomerase 2, mitochondrial (top2mt) from Dictyostelium discoideum (Social amoeba).